The primary structure comprises 45 residues: Large ribosomal subunit protein bL34 (45 aa).

Basic and acidic residues predominate over residues 1–10 (MTKRTLEGTN). The interval 1–27 (MTKRTLEGTNRKRKRTSGFRARMRSAT) is disordered. The span at 11–23 (RKRKRTSGFRARM) shows a compositional bias: basic residues.

Belongs to the bacterial ribosomal protein bL34 family.

The sequence is that of Large ribosomal subunit protein bL34 from Synechococcus elongatus (strain ATCC 33912 / PCC 7942 / FACHB-805) (Anacystis nidulans R2).